Reading from the N-terminus, the 158-residue chain is Cytochrome c-type biogenesis protein CcmE (158 aa).

At 1 to 7 the chain is on the cytoplasmic side; it reads MKPRHRR. The chain crosses the membrane as a helical; Signal-anchor for type II membrane protein span at residues 8–28; it reads LTLIALVLGGLGLSAGLALTA. At 29 to 158 the chain is on the periplasmic side; that stretch reads FQDNLVFFFT…DGHPETTTAY (130 aa). Residues His-123 and Tyr-127 each coordinate heme. The tract at residues 138–158 is disordered; that stretch reads RIGQGNGTPGPDGHPETTTAY.

This sequence belongs to the CcmE/CycJ family.

It is found in the cell inner membrane. Its function is as follows. Heme chaperone required for the biogenesis of c-type cytochromes. Transiently binds heme delivered by CcmC and transfers the heme to apo-cytochromes in a process facilitated by CcmF and CcmH. The polypeptide is Cytochrome c-type biogenesis protein CcmE (Alkalilimnicola ehrlichii (strain ATCC BAA-1101 / DSM 17681 / MLHE-1)).